A 191-amino-acid polypeptide reads, in one-letter code: MKIKKKERQRLLMELLEGNPFMTDEELSAHFGVSIQTIRLDRMEQNIPELRERIKDVAYKQRDSVIALAPEEVFGEIVDLVLEERAISIFDVGPEHVFERSGIARGHHLFAQANSLAVALVNNEFVLTAKASIQFTRPVRVGERVVAKAEMAGKGSGRTRILVTSHVNQEVVFTGEFAMYQQNETEERPQQ.

The region spanning 102–169 is the MaoC-like domain; sequence GIARGHHLFA…RILVTSHVNQ (68 aa).

This sequence belongs to the FapR family.

Transcriptional factor involved in regulation of membrane lipid biosynthesis by repressing genes involved in fatty acid and phospholipid metabolism. The sequence is that of Transcription factor FapR from Shouchella clausii (strain KSM-K16) (Alkalihalobacillus clausii).